We begin with the raw amino-acid sequence, 110 residues long: uncharacterized protein (110 aa).

It belongs to the HesB/IscA family.

This is an uncharacterized protein from Rickettsia prowazekii (strain Madrid E).